We begin with the raw amino-acid sequence, 145 residues long: Bacilliredoxin BrxB (145 aa).

Catalysis depends on nucleophile residues cysteine 52 and cysteine 54. At cysteine 52 the chain carries S-bacillithiol cysteine disulfide. The short motif at 52 to 54 (CGC) is the CXC active site motif element. A disulfide bridge links cysteine 52 with cysteine 54.

It belongs to the bacilliredoxin family. In terms of assembly, interacts with BrxC. N-terminal Cys of the CXC active site motif can react with bacillithiol (BSH) to form mixed disulfides. S-bacillithiolation protects Cys residues against overoxidation by acting as a redox switch in response to oxidative stress.

Its function is as follows. S-bacillithiolation is the formation of mixed disulfide bonds between protein thiols and the general thiol reductant bacillithiol (BSH) under oxidative stress. BSH is an equivalent of glutathione (GSH) in Firmicutes. This protein is a dithiol bacilliredoxin, which debacillithiolates (removes BSH) the S-bacillithiolated OhrR (OhrR-SSB) in vitro and in vivo NaOCl-generated S-bacillithiolated MetE (MetE-SSB). Involved in maintaining redox homeostasis in response to disulfide stress conditions. This chain is Bacilliredoxin BrxB, found in Bacillus subtilis (strain 168).